We begin with the raw amino-acid sequence, 108 residues long: Thioredoxin (108 aa).

Residues 2 to 108 (GKYFEATDKN…IAKKIDEHIG (107 aa)) form the Thioredoxin domain. A disulfide bridge links Cys-32 with Cys-35.

It belongs to the thioredoxin family.

Participates in various redox reactions through the reversible oxidation of its active center dithiol to a disulfide and catalyzes dithiol-disulfide exchange reactions. The polypeptide is Thioredoxin (trxA) (Chlorobaculum thiosulfatiphilum (Chlorobium limicola f.sp. thiosulfatophilum)).